We begin with the raw amino-acid sequence, 305 residues long: Protoheme IX farnesyltransferase (305 aa).

Transmembrane regions (helical) follow at residues isoleucine 31–valine 51, proline 53–phenylalanine 73, isoleucine 98–leucine 118, leucine 124–tryptophan 144, isoleucine 153–glycine 173, valine 181–isoleucine 201, alanine 221–tyrosine 241, proline 242–isoleucine 262, and serine 285–alanine 305.

Belongs to the UbiA prenyltransferase family. Protoheme IX farnesyltransferase subfamily.

The protein localises to the cell inner membrane. It catalyses the reaction heme b + (2E,6E)-farnesyl diphosphate + H2O = Fe(II)-heme o + diphosphate. It participates in porphyrin-containing compound metabolism; heme O biosynthesis; heme O from protoheme: step 1/1. Functionally, converts heme B (protoheme IX) to heme O by substitution of the vinyl group on carbon 2 of heme B porphyrin ring with a hydroxyethyl farnesyl side group. This is Protoheme IX farnesyltransferase from Gloeobacter violaceus (strain ATCC 29082 / PCC 7421).